The primary structure comprises 545 residues: Cryptochrome-1 (545 aa).

A Photolyase/cryptochrome alpha/beta domain is found at 3-140; that stretch reads INNILWFRHG…RCVENVSHTL (138 aa). FAD-binding positions include R237, S265, S267, Q308, H375, 407–409, C413, and N416; that span reads DAD.

The protein belongs to the DNA photolyase class-1 family. In terms of assembly, interacts with tim and per; promoted by light conditions. FAD serves as cofactor.

It is found in the cytoplasm. Its subcellular location is the perinuclear region. The protein resides in the nucleus. Functionally, blue light-dependent regulator that is the input of the circadian feedback loop. Has no photolyase activity for cyclobutane pyrimidine dimers or 6-4 photoproducts. Regulation of expression by light suggests a role in photoreception for locomotor activity rhythms. Functions, together with per, as a transcriptional repressor required for the oscillation of peripheral circadian clocks and for the correct specification of clock cells. Genes directly activated by the transcription factors Clock (Clk) and cycle (cyc) are repressed by cry. In Anopheles gambiae (African malaria mosquito), this protein is Cryptochrome-1.